A 383-amino-acid polypeptide reads, in one-letter code: Anhydro-N-acetylmuramic acid kinase (383 aa).

9–16 provides a ligand contact to ATP; that stretch reads GTSLDGID.

The protein belongs to the anhydro-N-acetylmuramic acid kinase family.

The catalysed reaction is 1,6-anhydro-N-acetyl-beta-muramate + ATP + H2O = N-acetyl-D-muramate 6-phosphate + ADP + H(+). Its pathway is amino-sugar metabolism; 1,6-anhydro-N-acetylmuramate degradation. The protein operates within cell wall biogenesis; peptidoglycan recycling. Functionally, catalyzes the specific phosphorylation of 1,6-anhydro-N-acetylmuramic acid (anhMurNAc) with the simultaneous cleavage of the 1,6-anhydro ring, generating MurNAc-6-P. Is required for the utilization of anhMurNAc either imported from the medium or derived from its own cell wall murein, and thus plays a role in cell wall recycling. This is Anhydro-N-acetylmuramic acid kinase from Clostridioides difficile (strain 630) (Peptoclostridium difficile).